We begin with the raw amino-acid sequence, 654 residues long: Chaperone protein DnaK (654 aa).

At Thr205 the chain carries Phosphothreonine; by autocatalysis. The disordered stretch occupies residues 592–654; that stretch reads ELERQMQQIG…EVEILDDKKP (63 aa). Positions 608–621 are enriched in polar residues; it reads AGQSETQSTGPGSY. The segment covering 622-636 has biased composition (low complexity); it reads QESSNQSSQHQTNNN.

The protein belongs to the heat shock protein 70 family.

In terms of biological role, acts as a chaperone. The polypeptide is Chaperone protein DnaK (Protochlamydia amoebophila (strain UWE25)).